Here is a 962-residue protein sequence, read N- to C-terminus: Glycine dehydrogenase (decarboxylating) (962 aa).

Position 709 is an N6-(pyridoxal phosphate)lysine (Lys709).

It belongs to the GcvP family. The glycine cleavage system is composed of four proteins: P, T, L and H. The cofactor is pyridoxal 5'-phosphate.

It catalyses the reaction N(6)-[(R)-lipoyl]-L-lysyl-[glycine-cleavage complex H protein] + glycine + H(+) = N(6)-[(R)-S(8)-aminomethyldihydrolipoyl]-L-lysyl-[glycine-cleavage complex H protein] + CO2. Functionally, the glycine cleavage system catalyzes the degradation of glycine. The P protein binds the alpha-amino group of glycine through its pyridoxal phosphate cofactor; CO(2) is released and the remaining methylamine moiety is then transferred to the lipoamide cofactor of the H protein. This Shewanella sediminis (strain HAW-EB3) protein is Glycine dehydrogenase (decarboxylating).